The sequence spans 94 residues: Phosphoribosyl-ATP pyrophosphatase (94 aa).

The protein belongs to the PRA-PH family.

The protein resides in the cytoplasm. It carries out the reaction 1-(5-phospho-beta-D-ribosyl)-ATP + H2O = 1-(5-phospho-beta-D-ribosyl)-5'-AMP + diphosphate + H(+). It participates in amino-acid biosynthesis; L-histidine biosynthesis; L-histidine from 5-phospho-alpha-D-ribose 1-diphosphate: step 2/9. The chain is Phosphoribosyl-ATP pyrophosphatase from Pyrobaculum arsenaticum (strain DSM 13514 / JCM 11321 / PZ6).